A 175-amino-acid polypeptide reads, in one-letter code: Large ribosomal subunit protein uL10 (175 aa).

Belongs to the universal ribosomal protein uL10 family. As to quaternary structure, part of the ribosomal stalk of the 50S ribosomal subunit. The N-terminus interacts with L11 and the large rRNA to form the base of the stalk. The C-terminus forms an elongated spine to which L12 dimers bind in a sequential fashion forming a multimeric L10(L12)X complex.

Its function is as follows. Forms part of the ribosomal stalk, playing a central role in the interaction of the ribosome with GTP-bound translation factors. The polypeptide is Large ribosomal subunit protein uL10 (Prochlorococcus marinus (strain NATL2A)).